We begin with the raw amino-acid sequence, 240 residues long: MKGLVSTGWKGPVKFRMPTAENLVPIRLDIQFEGQRYKDAFTWNPSDPDNEVVIFAKRTVKDLKLPYAFVTQIAQSIQSQLSDFRAYEGQDMYTGEKIIPIKLDLRVNHTLIKDQFLWDLNNFESDPEEFARTLCKDLGVEDPEVGPAVAFAIREQLYEIAIQSVASARESRLSKKGRRGSDHGSASKASGLSMDLMKLFSFKSSVVRKRKDLDVYEPVVDLLTSEEVDALEAREERHAR.

The protein belongs to the SNF5 family. As to quaternary structure, interacts with SWI3A and SWI3B, but not with BRM. In terms of tissue distribution, expressed in roots, stems, leaves, flowers and siliques.

It localises to the nucleus. Component of a multiprotein complex equivalent of the yeast SWI/SNF complex, an ATP-dependent chromatin-remodeling complex, which is required for the positive and negative regulation of gene expression of a large number of genes. It changes chromatin structure by altering DNA-histone contacts within a nucleosome, leading eventually to a change in nucleosome position, thus facilitating or repressing binding of gene-specific transcription factors. The polypeptide is Chromatin structure-remodeling complex protein BSH (BSH) (Arabidopsis thaliana (Mouse-ear cress)).